A 354-amino-acid chain; its full sequence is UDP-N-acetylglucosamine--N-acetylmuramyl-(pentapeptide) pyrophosphoryl-undecaprenol N-acetylglucosamine transferase (354 aa).

UDP-N-acetyl-alpha-D-glucosamine-binding positions include 11-13 (TAG), Arg-164, Ser-194, and Gln-289.

This sequence belongs to the glycosyltransferase 28 family. MurG subfamily.

The protein localises to the cell membrane. The catalysed reaction is di-trans,octa-cis-undecaprenyl diphospho-N-acetyl-alpha-D-muramoyl-L-alanyl-D-glutamyl-meso-2,6-diaminopimeloyl-D-alanyl-D-alanine + UDP-N-acetyl-alpha-D-glucosamine = di-trans,octa-cis-undecaprenyl diphospho-[N-acetyl-alpha-D-glucosaminyl-(1-&gt;4)]-N-acetyl-alpha-D-muramoyl-L-alanyl-D-glutamyl-meso-2,6-diaminopimeloyl-D-alanyl-D-alanine + UDP + H(+). The protein operates within cell wall biogenesis; peptidoglycan biosynthesis. In terms of biological role, cell wall formation. Catalyzes the transfer of a GlcNAc subunit on undecaprenyl-pyrophosphoryl-MurNAc-pentapeptide (lipid intermediate I) to form undecaprenyl-pyrophosphoryl-MurNAc-(pentapeptide)GlcNAc (lipid intermediate II). The sequence is that of UDP-N-acetylglucosamine--N-acetylmuramyl-(pentapeptide) pyrophosphoryl-undecaprenol N-acetylglucosamine transferase from Lachnospira eligens (strain ATCC 27750 / DSM 3376 / VPI C15-48 / C15-B4) (Eubacterium eligens).